A 255-amino-acid polypeptide reads, in one-letter code: Hydroxyacylglutathione hydrolase (255 aa).

Residues H56, H58, D60, H61, H114, D133, and H171 each contribute to the Zn(2+) site.

Belongs to the metallo-beta-lactamase superfamily. Glyoxalase II family. As to quaternary structure, monomer. Zn(2+) is required as a cofactor.

It catalyses the reaction an S-(2-hydroxyacyl)glutathione + H2O = a 2-hydroxy carboxylate + glutathione + H(+). Its pathway is secondary metabolite metabolism; methylglyoxal degradation; (R)-lactate from methylglyoxal: step 2/2. Functionally, thiolesterase that catalyzes the hydrolysis of S-D-lactoyl-glutathione to form glutathione and D-lactic acid. This is Hydroxyacylglutathione hydrolase from Rhodopseudomonas palustris (strain BisB5).